A 570-amino-acid polypeptide reads, in one-letter code: Periplasmic trehalase (570 aa).

An N-terminal signal peptide occupies residues 1–34 (MIPPEIRRSVLLQKAIKLALAGTLLTFASFSATA). Substrate is bound by residues arginine 159, 166–167 (WD), asparagine 203, 212–214 (RSQ), 284–286 (RPE), and glycine 317. Catalysis depends on proton donor/acceptor residues aspartate 319 and glutamate 503. A substrate-binding site is contributed by glutamate 518. A disordered region spans residues 545-570 (PCDSVPSTRPASLSATPTKTPSAATQ). Residues 554–570 (PASLSATPTKTPSAATQ) are compositionally biased toward low complexity.

It belongs to the glycosyl hydrolase 37 family. In terms of assembly, monomer.

The protein resides in the periplasm. It carries out the reaction alpha,alpha-trehalose + H2O = alpha-D-glucose + beta-D-glucose. In terms of biological role, provides the cells with the ability to utilize trehalose at high osmolarity by splitting it into glucose molecules that can subsequently be taken up by the phosphotransferase-mediated uptake system. This chain is Periplasmic trehalase, found in Salmonella agona (strain SL483).